The primary structure comprises 50 residues: Peptide encoded by miPEP319a (50 aa).

In terms of biological role, regulatory peptide encoded by the primary transcript (pri-miR319a) of the microRNA miR319a that enhances the accumulation of its corresponding mature miRNA. Acts probably as a transcriptional activator of its corresponding pri-miRNA. This chain is Peptide encoded by miPEP319a, found in Arabidopsis thaliana (Mouse-ear cress).